Reading from the N-terminus, the 346-residue chain is MLAQSHFFSKSFDLIPPQSPALRSANPSLRISSSYSNSRLSFLSSSAIAVPVSRRRFCLTMASNSKRPNISNESPSELSDTELDRFAAVGNALADASGEVIRKYFRKKFDIVDKDDMSPVTIADQMAEEAMVSIIFQNLPSHAIYGEEKGWRCKEESADYVWVLDPIDGTKSFITGKPVFGTLIALLYKGKPILGLIDQPILKERWIGMNGRRTKLNGEDISTRSCPKLSQAYLYTTSPHLFSEEAEKAYSRVRDKVKVPLYGCDCYAYALLASGFVDLVIESGLKPYDFLALVPVIEGAGGTITDWTGKRFLWEASSSAVATSFNVVAAGDSDIHQQALESLEWH.

The transit peptide at 1-61 (MLAQSHFFSK…VSRRRFCLTM (61 aa)) directs the protein to the chloroplast. 3 residues coordinate Mg(2+): Glu147, Asp165, and Asp168. Substrate is bound at residue Glu147. Substrate-binding positions include 167 to 170 (IDGT), 263 to 265 (GCD), Glu282, and Asp289. Asp289 lines the Mg(2+) pocket.

Belongs to the inositol monophosphatase superfamily. Mg(2+) is required as a cofactor. As to expression, ubiquitous. High expression in roots. Expressed in pistil and seed endosperm.

The protein localises to the plastid. The protein resides in the chloroplast. The catalysed reaction is a myo-inositol phosphate + H2O = myo-inositol + phosphate. The enzyme catalyses L-histidinol phosphate + H2O = L-histidinol + phosphate. It carries out the reaction beta-L-galactose 1-phosphate + H2O = L-galactose + phosphate. It functions in the pathway amino-acid biosynthesis; L-histidine biosynthesis; L-histidine from 5-phospho-alpha-D-ribose 1-diphosphate: step 8/9. It participates in polyol metabolism; myo-inositol biosynthesis; myo-inositol from D-glucose 6-phosphate: step 2/2. Its function is as follows. Phosphatase required for histidine production. Also acts on L-galactose 1-phosphate (L-Gal 1-P), D-myoinositol 3-phosphate (D-Ins 3-P) and D-myoinositol 1-phosphate (D-Ins 1-P). In Arabidopsis thaliana (Mouse-ear cress), this protein is Bifunctional phosphatase IMPL2, chloroplastic (HISN7).